The sequence spans 208 residues: Large ribosomal subunit protein uL4 (208 aa).

The segment at 44-79 is disordered; that stretch reads QRQGTHKSKERSEISGSTRKIGRQKGGGGARRGDMN.

It belongs to the universal ribosomal protein uL4 family. Part of the 50S ribosomal subunit.

One of the primary rRNA binding proteins, this protein initially binds near the 5'-end of the 23S rRNA. It is important during the early stages of 50S assembly. It makes multiple contacts with different domains of the 23S rRNA in the assembled 50S subunit and ribosome. Its function is as follows. Forms part of the polypeptide exit tunnel. This chain is Large ribosomal subunit protein uL4, found in Bacteroides fragilis (strain YCH46).